A 331-amino-acid polypeptide reads, in one-letter code: Ketol-acid reductoisomerase (NADP(+)) (331 aa).

The KARI N-terminal Rossmann domain occupies 2-181 (TKVYYEDAVK…GATRAGVIET (180 aa)). NADP(+) contacts are provided by residues 25 to 28 (YGSQ), Arg-48, Ser-52, and 82 to 85 (DETQ). The active site involves His-107. Residue Gly-133 participates in NADP(+) binding. The region spanning 182–327 (TFKEETETDL…AELREMMPFV (146 aa)) is the KARI C-terminal knotted domain. Positions 190, 194, 226, and 230 each coordinate Mg(2+). Ser-251 lines the substrate pocket.

Belongs to the ketol-acid reductoisomerase family. Mg(2+) is required as a cofactor.

The enzyme catalyses (2R)-2,3-dihydroxy-3-methylbutanoate + NADP(+) = (2S)-2-acetolactate + NADPH + H(+). It catalyses the reaction (2R,3R)-2,3-dihydroxy-3-methylpentanoate + NADP(+) = (S)-2-ethyl-2-hydroxy-3-oxobutanoate + NADPH + H(+). Its pathway is amino-acid biosynthesis; L-isoleucine biosynthesis; L-isoleucine from 2-oxobutanoate: step 2/4. The protein operates within amino-acid biosynthesis; L-valine biosynthesis; L-valine from pyruvate: step 2/4. Functionally, involved in the biosynthesis of branched-chain amino acids (BCAA). Catalyzes an alkyl-migration followed by a ketol-acid reduction of (S)-2-acetolactate (S2AL) to yield (R)-2,3-dihydroxy-isovalerate. In the isomerase reaction, S2AL is rearranged via a Mg-dependent methyl migration to produce 3-hydroxy-3-methyl-2-ketobutyrate (HMKB). In the reductase reaction, this 2-ketoacid undergoes a metal-dependent reduction by NADPH to yield (R)-2,3-dihydroxy-isovalerate. The chain is Ketol-acid reductoisomerase (NADP(+)) from Listeria innocua serovar 6a (strain ATCC BAA-680 / CLIP 11262).